A 214-amino-acid polypeptide reads, in one-letter code: Heat shock protein 26 (214 aa).

Residue S2 is modified to N-acetylserine. Phosphothreonine is present on T42. The sHSP domain maps to 86 to 207 (GFPRSVAVPV…KNHVKKIEVS (122 aa)). S90 carries the phosphoserine modification. T163 bears the Phosphothreonine mark. Residues 192-214 (KPQKDGKNHVKKIEVSSQESWGN) form a disordered region. The segment covering 193 to 205 (PQKDGKNHVKKIE) has biased composition (basic and acidic residues). A phosphoserine mark is found at S208 and S211.

Belongs to the small heat shock protein (HSP20) family. In terms of assembly, present in large complexes.

Functionally, not known. One of the major polypeptides produced on heat shock. The polypeptide is Heat shock protein 26 (HSP26) (Saccharomyces cerevisiae (strain ATCC 204508 / S288c) (Baker's yeast)).